The following is a 744-amino-acid chain: 6-phosphofructo-2-kinase/fructose-2,6-bisphosphatase (744 aa).

Disordered regions lie at residues 1–23 (MGSG…GGQL) and 213–245 (RSLS…DGSP). A lipid anchor (N-myristoyl glycine) is attached at Gly-2. The region spanning 17–122 (NGGGGQLYVS…GDARLALFRL (106 aa)) is the CBM20 domain. The span at 213 to 232 (RSLSASGSFRNDSTPKAAQR) shows a compositional bias: polar residues. Residue Ser-220 is modified to Phosphoserine; by CPK3. Phosphoserine is present on residues Ser-276 and Ser-295. The interval 301-549 (SLSASSFLID…VFFLVNTHLT (249 aa)) is 6-phosphofructo-2-kinase. Ser-303 is modified (phosphoserine; by CPK3). 349–357 (GLPARGKTF) contributes to the ATP binding site. Beta-D-fructose 6-phosphate is bound by residues Arg-382 and Arg-406. Asp-431 is a catalytic residue. Thr-433 and Arg-439 together coordinate beta-D-fructose 6-phosphate. Cys-460 is a catalytic residue. Residue 469–474 (NIRLKI) participates in ATP binding. Beta-D-fructose 6-phosphate contacts are provided by Arg-496 and Tyr-500. The fructose-2,6-bisphosphatase stretch occupies residues 550 to 744 (PRPILLTRHG…VQEKRYKLMD (195 aa)). Residue Arg-557 participates in beta-D-fructose 2,6-bisphosphate binding. His-558 acts as the Tele-phosphohistidine intermediate in catalysis. The beta-D-fructose 2,6-bisphosphate site is built by Asn-564 and Gly-570. Catalysis depends on Glu-630, which acts as the Proton donor/acceptor. Beta-D-fructose 2,6-bisphosphate contacts are provided by Tyr-641, Arg-655, Lys-659, Tyr-670, Gln-697, and Arg-701. Residue 652–655 (YESR) coordinates ATP. Residue 697–701 (QAVLR) coordinates ATP.

It in the C-terminal section; belongs to the phosphoglycerate mutase family. In terms of assembly, interacts with 14-3-3 proteins; these interactions may regulate both nitrate assimilation and sucrose/starch partitioning in leaves during the diurnal cycle. Post-translationally, phosphorylation at Ser-220 and Ser-303 by CPK3 promotes 14-3-3 proteins binding.

The protein resides in the membrane. The protein localises to the cytoplasm. The enzyme catalyses beta-D-fructose 2,6-bisphosphate + H2O = beta-D-fructose 6-phosphate + phosphate. The catalysed reaction is beta-D-fructose 6-phosphate + ATP = beta-D-fructose 2,6-bisphosphate + ADP + H(+). With respect to regulation, 6-phosphofructo-2-kinase activity is activated by pyruvate. 6-phosphofructo-2-kinase activity is inhibited by PPi, phosphoenolpyruvate and 2-phosphoglycerate. Fructose-2,6-bisphosphatase activity is inhibited by pyruvate, fructose 1,6-bisphosphate and 6-phosphogluconate. In terms of biological role, synthesis and degradation of fructose 2,6-bisphosphate. Regulates carbon partitioning between sucrose versus starch during the diurnal cycle. The protein is 6-phosphofructo-2-kinase/fructose-2,6-bisphosphatase (FKFBP) of Arabidopsis thaliana (Mouse-ear cress).